Consider the following 370-residue polypeptide: Queuine tRNA-ribosyltransferase (370 aa).

D89 functions as the Proton acceptor in the catalytic mechanism. Substrate-binding positions include 89 to 93, D143, Q187, and G214; that span reads DSGGF. The RNA binding stretch occupies residues 245 to 251; sequence GVGTPED. Residue D264 is the Nucleophile of the active site. The interval 269-273 is RNA binding; important for wobble base 34 recognition; it reads TRNAR. C302, C304, C307, and H333 together coordinate Zn(2+).

The protein belongs to the queuine tRNA-ribosyltransferase family. In terms of assembly, homodimer. Within each dimer, one monomer is responsible for RNA recognition and catalysis, while the other monomer binds to the replacement base PreQ1. The cofactor is Zn(2+).

It carries out the reaction 7-aminomethyl-7-carbaguanine + guanosine(34) in tRNA = 7-aminomethyl-7-carbaguanosine(34) in tRNA + guanine. It functions in the pathway tRNA modification; tRNA-queuosine biosynthesis. In terms of biological role, catalyzes the base-exchange of a guanine (G) residue with the queuine precursor 7-aminomethyl-7-deazaguanine (PreQ1) at position 34 (anticodon wobble position) in tRNAs with GU(N) anticodons (tRNA-Asp, -Asn, -His and -Tyr). Catalysis occurs through a double-displacement mechanism. The nucleophile active site attacks the C1' of nucleotide 34 to detach the guanine base from the RNA, forming a covalent enzyme-RNA intermediate. The proton acceptor active site deprotonates the incoming PreQ1, allowing a nucleophilic attack on the C1' of the ribose to form the product. After dissociation, two additional enzymatic reactions on the tRNA convert PreQ1 to queuine (Q), resulting in the hypermodified nucleoside queuosine (7-(((4,5-cis-dihydroxy-2-cyclopenten-1-yl)amino)methyl)-7-deazaguanosine). The chain is Queuine tRNA-ribosyltransferase from Azoarcus sp. (strain BH72).